Reading from the N-terminus, the 130-residue chain is YopE regulator (130 aa).

Functionally, positive regulator of YopE. In Yersinia enterocolitica serotype O:8 / biotype 1B (strain NCTC 13174 / 8081), this protein is YopE regulator (yerA).